A 180-amino-acid polypeptide reads, in one-letter code: Large ribosomal subunit protein uL6 (180 aa).

The protein belongs to the universal ribosomal protein uL6 family. As to quaternary structure, part of the 50S ribosomal subunit.

In terms of biological role, this protein binds to the 23S rRNA, and is important in its secondary structure. It is located near the subunit interface in the base of the L7/L12 stalk, and near the tRNA binding site of the peptidyltransferase center. This is Large ribosomal subunit protein uL6 from Bdellovibrio bacteriovorus (strain ATCC 15356 / DSM 50701 / NCIMB 9529 / HD100).